Consider the following 154-residue polypeptide: 17 kDa A-type inclusion protein (154 aa).

A coiled-coil region spans residues 17 to 85; that stretch reads QKDCSDKLDR…YKRELERDRY (69 aa). The segment at 88–154 is disordered; the sequence is SRYLTSSSDP…DVEPEHPPAF (67 aa).

The polypeptide is 17 kDa A-type inclusion protein (Bos taurus (Bovine)).